We begin with the raw amino-acid sequence, 894 residues long: Glutamate receptor 3 (894 aa).

The N-terminal stretch at 1 to 28 (MARQKKMGQNVLRAVFFLVLGLLGHSHG) is a signal peptide. Topologically, residues 29-552 (GFPNTISIGG…GVFSFLDPLA (524 aa)) are extracellular. Residues asparagine 63, asparagine 266, asparagine 380, asparagine 415, and asparagine 422 are each glycosylated (N-linked (GlcNAc...) asparagine). A disulfide bridge connects residues cysteine 91 and cysteine 340. 3 residues coordinate L-glutamate: proline 508, threonine 510, and arginine 515. A helical membrane pass occupies residues 553-573 (YEIWMCIVFASIGVSVVLFLV). Over 574-602 (SRFSPYEWHLEDNNEEPRDPQSPPDPPNE) the chain is Cytoplasmic. An intramembrane region (helical; Pore-forming) is located at residues 603 to 618 (FGIFNSLWFSLGAFMQ). The stretch at 619 to 621 (QGC) is an intramembrane region. Residue cysteine 621 is the site of S-palmitoyl cysteine attachment. Residues 622-627 (DISPRS) are Cytoplasmic-facing. A helical membrane pass occupies residues 628–648 (LSGRIVGGVWWFFTLIIISSY). Topologically, residues 649–823 (TANLAAFLTV…DKTSALSLSN (175 aa)) are extracellular. 3 residues coordinate L-glutamate: serine 686, threonine 687, and glutamate 737. A disulfide bond links cysteine 750 and cysteine 805. A helical transmembrane segment spans residues 824–844 (VAGVFYILVGGLGLAMMVALI). The Cytoplasmic portion of the chain corresponds to 845 to 894 (EFCYKSRAESKRMKLTKNTQNFKPAPATNTQNYATYREGYNVYGTESVKI). Residue cysteine 847 is the site of S-palmitoyl cysteine attachment. A phosphotyrosine mark is found at tyrosine 877 and tyrosine 887.

This sequence belongs to the glutamate-gated ion channel (TC 1.A.10.1) family. GRIA3 subfamily. As to quaternary structure, homotetramer or heterotetramer of pore-forming glutamate receptor subunits. Tetramers may be formed by the dimerization of dimers. Interacts with PICK1, GRIP1 and GRIP2. Found in a complex with GRIA1, GRIA2, GRIA4, CNIH2, CNIH3, CACNG2, CACNG3, CACNG4, CACNG5, CACNG7 and CACNG8. Interacts with CACNG5. Found in a complex with GRIA1, GRIA2, GRIA4, DLG4, CACNG8 and CNIH2.

The protein resides in the cell membrane. It localises to the postsynaptic cell membrane. It is found in the postsynaptic density membrane. It catalyses the reaction Ca(2+)(in) = Ca(2+)(out). Its function is as follows. Ionotropic glutamate receptor that functions as a ligand-gated cation channel, gated by L-glutamate and glutamatergic agonists such as alpha-amino-3-hydroxy-5-methyl-4-isoxazolepropionic acid (AMPA), quisqualic acid, and kainic acid. L-glutamate acts as an excitatory neurotransmitter at many synapses in the central nervous system and plays an important role in fast excitatory synaptic transmission by inducing long-term potentiation. Binding of the excitatory neurotransmitter L-glutamate induces a conformation change, leading to the opening of the cation channel, and thereby converts the chemical signal to an electrical impulse upon entry of calcium. The receptor then desensitizes rapidly and enters a transient inactive state, characterized by the presence of bound agonist. In the presence of CACNG8, shows resensitization which is characterized by a delayed accumulation of current flux upon continued application of glutamate. This chain is Glutamate receptor 3, found in Macaca fascicularis (Crab-eating macaque).